A 166-amino-acid polypeptide reads, in one-letter code: Transcription factor HES-5 (166 aa).

The bHLH domain maps to 16 to 72 (KNRLRKPVVEKMRRDRINSSIEQLKLLLEQEFARHQPNSKLEKADILEMAVSYLKHS). Positions 88–119 (YSEGYSWCLQEAVQFLTLHAASDTQMKLLYHF) constitute an Orange domain. The interval 125 to 166 (PAAPVKETPTPGAAPQPARSSTKAAASVSTSRQSACGLWRPW) is disordered. Low complexity predominate over residues 142–156 (ARSSTKAAASVSTSR). Residues 163–166 (WRPW) carry the WRPW motif motif.

In terms of assembly, transcription repression requires formation of a complex with a corepressor protein of the Groucho/TLE family. Expressed predominantly in embryonic neural lineage cells.

It localises to the nucleus. Its function is as follows. Transcriptional repressor of genes that require a bHLH protein for their transcription. Plays an important role as neurogenesis negative regulator. The polypeptide is Transcription factor HES-5 (Hes5) (Rattus norvegicus (Rat)).